A 358-amino-acid polypeptide reads, in one-letter code: Uptake hydrogenase small subunit (358 aa).

Residues M1–A45 form the signal peptide. Residues C62, C65, C160, C194, H232, C235, C260, and C266 each contribute to the [4Fe-4S] cluster site. Residues C275, C294, and C297 each contribute to the [3Fe-4S] cluster site.

This sequence belongs to the [NiFe]/[NiFeSe] hydrogenase small subunit family. Heterodimer of a large and a small subunit. It depends on [4Fe-4S] cluster as a cofactor. [3Fe-4S] cluster is required as a cofactor.

Its subcellular location is the cell membrane. It catalyses the reaction H2 + A = AH2. Functionally, this enzyme recycles the H(2) produced by nitrogenase to increase the production of ATP and to protect nitrogenase against inhibition or damage by O(2) under carbon- or phosphate-limited conditions. In Rhodobacter capsulatus (Rhodopseudomonas capsulata), this protein is Uptake hydrogenase small subunit (hupA).